A 638-amino-acid polypeptide reads, in one-letter code: Intron-encoded RNA maturase bI4 (638 aa).

A COB exons 1 to 4 encoded region spans residues 1–253 (MAFRKSNVYL…VFYSPNTLGQ (253 aa)). Residues 253-638 (QNMALLLITY…LKFNEKWNNN (386 aa)) are COB intron 4 encoded.

This sequence in the C-terminal section; belongs to the LAGLIDADG endonuclease family. In terms of assembly, forms a ternary complex with intron derived RNA and the imported mitochondrial leucyl-tRNA synthetase NAM2. The proteins do not interact directly with each other. In terms of processing, the mature protein may arise from proteolytic cleavage of an in-frame translation of COB exons 1 to 4 plus intron 4, containing the bI4 open reading frame. Cleavage would take place close to the Met-385 resulting in an active maturase of about 30 kDa.

It localises to the mitochondrion. Its function is as follows. Mitochondrial mRNA maturase required for splicing of intron 4 of the cytochrome b (COB) gene, containing its own coding sequence, and intron 4 in COX1, coding for the related homing endonuclease aI4. In vivo splicing requires in addition the imported mitochondrial leucyl-tRNA synthetase NAM2. Both proteins seem to stimulate the intrinsic ribozyme activity of intron bI4 through binding to and stabilizing specific secondary and tertiary structure elements in the RNA. The protein is Intron-encoded RNA maturase bI4 (BI4) of Saccharomyces cerevisiae (strain ATCC 204508 / S288c) (Baker's yeast).